A 565-amino-acid polypeptide reads, in one-letter code: Periplasmic trehalase (565 aa).

The first 30 residues, 1 to 30 (MKSPAPSRPQKMALIPACIFLCFAALSVQA), serve as a signal peptide directing secretion. Substrate contacts are provided by residues Arg-152, 159 to 160 (WD), Asn-196, 205 to 207 (RSQ), 277 to 279 (RPE), and Gly-310. Residues Asp-312 and Glu-496 each act as proton donor/acceptor in the active site. Substrate is bound at residue Glu-511. Residues 538 to 565 (PCDNVPATRPTVKSATTQPSTKEAQPTP) are disordered. A compositionally biased stretch (polar residues) spans 548–565 (TVKSATTQPSTKEAQPTP).

This sequence belongs to the glycosyl hydrolase 37 family. In terms of assembly, monomer.

The protein resides in the periplasm. It catalyses the reaction alpha,alpha-trehalose + H2O = alpha-D-glucose + beta-D-glucose. Provides the cells with the ability to utilize trehalose at high osmolarity by splitting it into glucose molecules that can subsequently be taken up by the phosphotransferase-mediated uptake system. In Escherichia coli (strain 55989 / EAEC), this protein is Periplasmic trehalase.